A 218-amino-acid polypeptide reads, in one-letter code: Adenylate kinase (218 aa).

10–15 (GAGKGT) provides a ligand contact to ATP. Residues 30–59 (STGDMLRAAVKQGTPLGQEAKKVMDAGGLV) form an NMP region. Residues Thr31, Arg36, 57 to 59 (GLV), 85 to 88 (GFPR), and Gln92 each bind AMP. The interval 122 to 159 (GRRVHPASGRSYHVRFNPPKQEGLDDVTGEPLVQRDDD) is LID. ATP-binding positions include Arg123 and 132–133 (SY). Residues Arg156 and Arg167 each coordinate AMP. Position 203 (Gly203) interacts with ATP.

The protein belongs to the adenylate kinase family. In terms of assembly, monomer.

Its subcellular location is the cytoplasm. The enzyme catalyses AMP + ATP = 2 ADP. Its pathway is purine metabolism; AMP biosynthesis via salvage pathway; AMP from ADP: step 1/1. Functionally, catalyzes the reversible transfer of the terminal phosphate group between ATP and AMP. Plays an important role in cellular energy homeostasis and in adenine nucleotide metabolism. This chain is Adenylate kinase, found in Bordetella petrii (strain ATCC BAA-461 / DSM 12804 / CCUG 43448).